The following is a 154-amino-acid chain: Holo-[acyl-carrier-protein] synthase (154 aa).

Mg(2+)-binding residues include D8 and E57.

It belongs to the P-Pant transferase superfamily. AcpS family. Mg(2+) serves as cofactor.

It is found in the cytoplasm. It carries out the reaction apo-[ACP] + CoA = holo-[ACP] + adenosine 3',5'-bisphosphate + H(+). Its function is as follows. Transfers the 4'-phosphopantetheine moiety from coenzyme A to a Ser of acyl-carrier-protein. The polypeptide is Holo-[acyl-carrier-protein] synthase (Nitrosococcus oceani (strain ATCC 19707 / BCRC 17464 / JCM 30415 / NCIMB 11848 / C-107)).